Here is a 238-residue protein sequence, read N- to C-terminus: NAD(P)H-quinone oxidoreductase subunit K 1 (238 aa).

[4Fe-4S] cluster contacts are provided by Cys-54, Cys-55, Cys-119, and Cys-150.

The protein belongs to the complex I 20 kDa subunit family. NDH-1 can be composed of about 15 different subunits; different subcomplexes with different compositions have been identified which probably have different functions. Requires [4Fe-4S] cluster as cofactor.

It is found in the cellular thylakoid membrane. The enzyme catalyses a plastoquinone + NADH + (n+1) H(+)(in) = a plastoquinol + NAD(+) + n H(+)(out). It carries out the reaction a plastoquinone + NADPH + (n+1) H(+)(in) = a plastoquinol + NADP(+) + n H(+)(out). Functionally, NDH-1 shuttles electrons from an unknown electron donor, via FMN and iron-sulfur (Fe-S) centers, to quinones in the respiratory and/or the photosynthetic chain. The immediate electron acceptor for the enzyme in this species is believed to be plastoquinone. Couples the redox reaction to proton translocation, and thus conserves the redox energy in a proton gradient. Cyanobacterial NDH-1 also plays a role in inorganic carbon-concentration. The chain is NAD(P)H-quinone oxidoreductase subunit K 1 from Cyanothece sp. (strain PCC 7425 / ATCC 29141).